The sequence spans 397 residues: ATP phosphoribosyltransferase regulatory subunit (397 aa).

The protein belongs to the class-II aminoacyl-tRNA synthetase family. HisZ subfamily. Heteromultimer composed of HisG and HisZ subunits.

It localises to the cytoplasm. The protein operates within amino-acid biosynthesis; L-histidine biosynthesis; L-histidine from 5-phospho-alpha-D-ribose 1-diphosphate: step 1/9. Functionally, required for the first step of histidine biosynthesis. May allow the feedback regulation of ATP phosphoribosyltransferase activity by histidine. In Nitrosococcus oceani (strain ATCC 19707 / BCRC 17464 / JCM 30415 / NCIMB 11848 / C-107), this protein is ATP phosphoribosyltransferase regulatory subunit.